We begin with the raw amino-acid sequence, 515 residues long: Maturase K (515 aa).

Belongs to the intron maturase 2 family. MatK subfamily.

The protein localises to the plastid. Its subcellular location is the chloroplast. In terms of biological role, usually encoded in the trnK tRNA gene intron. Probably assists in splicing its own and other chloroplast group II introns. The polypeptide is Maturase K (Pseudotsuga menziesii (Douglas-fir)).